The sequence spans 478 residues: Light-independent protochlorophyllide reductase subunit N (478 aa).

[4Fe-4S] cluster is bound by residues Cys22, Cys47, and Cys107.

It belongs to the BchN/ChlN family. In terms of assembly, protochlorophyllide reductase is composed of three subunits; ChlL, ChlN and ChlB. Forms a heterotetramer of two ChlB and two ChlN subunits. [4Fe-4S] cluster serves as cofactor.

The protein localises to the plastid. Its subcellular location is the chloroplast. The enzyme catalyses chlorophyllide a + oxidized 2[4Fe-4S]-[ferredoxin] + 2 ADP + 2 phosphate = protochlorophyllide a + reduced 2[4Fe-4S]-[ferredoxin] + 2 ATP + 2 H2O. It participates in porphyrin-containing compound metabolism; chlorophyll biosynthesis (light-independent). In terms of biological role, component of the dark-operative protochlorophyllide reductase (DPOR) that uses Mg-ATP and reduced ferredoxin to reduce ring D of protochlorophyllide (Pchlide) to form chlorophyllide a (Chlide). This reaction is light-independent. The NB-protein (ChlN-ChlB) is the catalytic component of the complex. The polypeptide is Light-independent protochlorophyllide reductase subunit N (Chlorokybus atmophyticus (Soil alga)).